A 252-amino-acid polypeptide reads, in one-letter code: Hydroxyacylglutathione hydrolase (252 aa).

Residues H54, H56, D58, H59, H113, D132, and H170 each coordinate Zn(2+).

It belongs to the metallo-beta-lactamase superfamily. Glyoxalase II family. In terms of assembly, monomer. Zn(2+) is required as a cofactor.

The catalysed reaction is an S-(2-hydroxyacyl)glutathione + H2O = a 2-hydroxy carboxylate + glutathione + H(+). Its pathway is secondary metabolite metabolism; methylglyoxal degradation; (R)-lactate from methylglyoxal: step 2/2. Functionally, thiolesterase that catalyzes the hydrolysis of S-D-lactoyl-glutathione to form glutathione and D-lactic acid. This chain is Hydroxyacylglutathione hydrolase, found in Gloeobacter violaceus (strain ATCC 29082 / PCC 7421).